We begin with the raw amino-acid sequence, 75 residues long: ATP synthase subunit c (75 aa).

Transmembrane regions (helical) follow at residues 12–32 and 49–69; these read LASIGYGLAAIGSAIGVGIVV and LTVLMYVGVAFTEALALIGIG.

This sequence belongs to the ATPase C chain family. In terms of assembly, F-type ATPases have 2 components, F(1) - the catalytic core - and F(0) - the membrane proton channel. F(1) has five subunits: alpha(3), beta(3), gamma(1), delta(1), epsilon(1). F(0) has three main subunits: a(1), b(2) and c(10-14). The alpha and beta chains form an alternating ring which encloses part of the gamma chain. F(1) is attached to F(0) by a central stalk formed by the gamma and epsilon chains, while a peripheral stalk is formed by the delta and b chains.

It localises to the cell membrane. Its function is as follows. F(1)F(0) ATP synthase produces ATP from ADP in the presence of a proton or sodium gradient. F-type ATPases consist of two structural domains, F(1) containing the extramembraneous catalytic core and F(0) containing the membrane proton channel, linked together by a central stalk and a peripheral stalk. During catalysis, ATP synthesis in the catalytic domain of F(1) is coupled via a rotary mechanism of the central stalk subunits to proton translocation. Functionally, key component of the F(0) channel; it plays a direct role in translocation across the membrane. A homomeric c-ring of between 10-14 subunits forms the central stalk rotor element with the F(1) delta and epsilon subunits. In Tropheryma whipplei (strain TW08/27) (Whipple's bacillus), this protein is ATP synthase subunit c.